Here is a 560-residue protein sequence, read N- to C-terminus: Protein GAT2 (560 aa).

Disordered regions lie at residues 274-297, 345-383, and 412-461; these read RQQE…FSNK, FLST…ISSS, and LNTK…SDEK. Positions 347-361 are enriched in low complexity; it reads STSSSSPSPTAGSAP. The segment covering 369-378 has biased composition (basic and acidic residues); sequence RQDDPNDKKM. Basic residues predominate over residues 414–425; the sequence is TKKKNNRGRPRA. Over residues 428-456 the composition is skewed to polar residues; the sequence is RQPTLTTSSHFINNSNPGAAAVSTTTPAA. The GATA-type zinc finger occupies 472–497; that stretch reads CFHCGETETPEWRKGPYGTRTLCNAC.

This chain is Protein GAT2 (GAT2), found in Saccharomyces cerevisiae (strain ATCC 204508 / S288c) (Baker's yeast).